A 147-amino-acid polypeptide reads, in one-letter code: D-aminoacyl-tRNA deacylase (147 aa).

Positions 136-137 match the Gly-cisPro motif, important for rejection of L-amino acids motif; that stretch reads GP.

This sequence belongs to the DTD family. Homodimer.

It localises to the cytoplasm. It carries out the reaction glycyl-tRNA(Ala) + H2O = tRNA(Ala) + glycine + H(+). It catalyses the reaction a D-aminoacyl-tRNA + H2O = a tRNA + a D-alpha-amino acid + H(+). In terms of biological role, an aminoacyl-tRNA editing enzyme that deacylates mischarged D-aminoacyl-tRNAs. Also deacylates mischarged glycyl-tRNA(Ala), protecting cells against glycine mischarging by AlaRS. Acts via tRNA-based rather than protein-based catalysis; rejects L-amino acids rather than detecting D-amino acids in the active site. By recycling D-aminoacyl-tRNA to D-amino acids and free tRNA molecules, this enzyme counteracts the toxicity associated with the formation of D-aminoacyl-tRNA entities in vivo and helps enforce protein L-homochirality. The sequence is that of D-aminoacyl-tRNA deacylase from Streptococcus agalactiae serotype Ia (strain ATCC 27591 / A909 / CDC SS700).